We begin with the raw amino-acid sequence, 540 residues long: Aquaporin-5 (540 aa).

The interval 1-224 is disordered; the sequence is MSGEGTDLPT…ESIDGYNYES (224 aa). At 1–263 the chain is on the cytoplasmic side; it reads MSGEGTDLPT…QWMNSNFKNH (263 aa). The segment covering 25 to 44 has biased composition (polar residues); sequence PGSSQQQLVPIAHTISSPSK. Basic and acidic residues-rich tracts occupy residues 119-133, 140-155, 174-194, and 204-214; these read RARE…EREN, RARD…ERSR, YFDD…KGMR, and SGEKVRRKSTD. Residues 264–284 traverse the membrane as a helical segment; that stretch reads FVATIGEFVGTTMFLFFAFAG. Residues 285–308 lie on the Extracellular side of the membrane; sequence TQVANIDSNTVNTTTGAATGFNIA. N-linked (GlcNAc...) asparagine glycosylation occurs at N296. The chain crosses the membrane as a helical span at residues 309 to 329; it reads VQLYIAVIFGFSLMVNVWIFF. Over 330-332 the chain is Cytoplasmic; it reads RIS. The helical transmembrane segment at 333–353 threads the bilayer; sequence GGLFNPAVTLGMVLVGAIPIP. The Extracellular portion of the chain corresponds to 354-356; it reads RAA. Residues 357-377 traverse the membrane as a helical segment; it reads CLFFAQILGGIAASGMVLGLF. Residues 378-393 lie on the Cytoplasmic side of the membrane; the sequence is PTTFNVRTTLGASTST. A helical transmembrane segment spans residues 394–414; that stretch reads VQGVFIEAILTAELVFTIFML. Residues 415-420 are Extracellular-facing; that stretch reads AKEKHK. The helical transmembrane segment at 421–441 threads the bilayer; it reads ATFIAPVGIGLALFIAEMVGV. Residues 442 to 467 lie on the Cytoplasmic side of the membrane; sequence YYTGGSLNPARSFGPCVVSGSFDKEH. The helical transmembrane segment at 468 to 488 threads the bilayer; sequence WIYWIGPITGTFIAVFFYKFI. The Extracellular portion of the chain corresponds to 489–540; sequence KMLEYEMANPGQDGDAKNDPTQNEKKREQILEERNRRYEKRNGSLRPGSRLS. The tract at residues 499–540 is disordered; it reads GQDGDAKNDPTQNEKKREQILEERNRRYEKRNGSLRPGSRLS. Positions 502–530 are enriched in basic and acidic residues; it reads GDAKNDPTQNEKKREQILEERNRRYEKRN. An N-linked (GlcNAc...) asparagine glycan is attached at N530.

This sequence belongs to the MIP/aquaporin (TC 1.A.8) family.

It is found in the membrane. It catalyses the reaction H2O(in) = H2O(out). Its function is as follows. Water channel required to facilitate the transport of water across membranes. May play a role in the vegetative growth. The chain is Aquaporin-5 from Botryotinia fuckeliana (strain B05.10) (Noble rot fungus).